Reading from the N-terminus, the 312-residue chain is Lichenase-2 (312 aa).

The signal sequence occupies residues Pro-1 to Ser-6. Glu-99 functions as the Proton donor in the catalytic mechanism. A glycan (N-linked (GlcNAc...) asparagine) is linked at Asn-196. The active-site Nucleophile is Glu-238.

It belongs to the glycosyl hydrolase 17 family.

It carries out the reaction Hydrolysis of (1-&gt;4)-beta-D-glucosidic linkages in beta-D-glucans containing (1-&gt;3)- and (1-&gt;4)-bonds.. Its pathway is glycan metabolism; beta-D-glucan degradation. Functions in plant cell wall hydrolysis during mobilization of the endosperm in germinating grain or during the growth of vegetative tissues. This Hordeum vulgare (Barley) protein is Lichenase-2.